A 309-amino-acid polypeptide reads, in one-letter code: Glutaminase (309 aa).

The substrate site is built by Ser-64, Asn-114, Glu-160, Asn-167, Tyr-191, Tyr-243, and Val-261.

It belongs to the glutaminase family. As to quaternary structure, homotetramer.

It carries out the reaction L-glutamine + H2O = L-glutamate + NH4(+). This chain is Glutaminase, found in Methylorubrum populi (strain ATCC BAA-705 / NCIMB 13946 / BJ001) (Methylobacterium populi).